Consider the following 344-residue polypeptide: Protein RecA (344 aa).

ATP is bound at residue 65-72 (GPESSGKT). A compositionally biased stretch (basic and acidic residues) spans 323-337 (ELREKFQPAEAPREA). Residues 323–344 (ELREKFQPAEAPREAGDDEDKE) form a disordered region.

It belongs to the RecA family.

It is found in the cytoplasm. Can catalyze the hydrolysis of ATP in the presence of single-stranded DNA, the ATP-dependent uptake of single-stranded DNA by duplex DNA, and the ATP-dependent hybridization of homologous single-stranded DNAs. It interacts with LexA causing its activation and leading to its autocatalytic cleavage. This is Protein RecA from Xanthomonas axonopodis pv. citri (strain 306).